The following is a 412-amino-acid chain: Adipocyte plasma membrane-associated protein (412 aa).

A disordered region spans residues 1-32 (MTEADGLRQRRPLRPQVVTDDNRTPEAKGGSS). Residues 1-39 (MTEADGLRQRRPLRPQVVTDDNRTPEAKGGSSFSGRVFR) are Cytoplasmic-facing. Thr-19 is subject to Phosphothreonine. Residues 40–60 (ATFLMLAAFLTIPLLGALVLL) form a helical membrane-spanning segment. Topologically, residues 61-412 (DSPIDPEPLS…RAPYLCRLRL (352 aa)) are extracellular. A glycan (N-linked (GlcNAc...) asparagine) is linked at Asn-159.

This sequence belongs to the strictosidine synthase family.

The protein localises to the membrane. Functionally, exhibits strong arylesterase activity with beta-naphthyl acetate and phenyl acetate. May play a role in adipocyte differentiation. The protein is Adipocyte plasma membrane-associated protein (APMAP) of Bos taurus (Bovine).